Consider the following 198-residue polypeptide: IMP cyclohydrolase (198 aa).

The protein belongs to the archaeal IMP cyclohydrolase family.

The catalysed reaction is IMP + H2O = 5-formamido-1-(5-phospho-D-ribosyl)imidazole-4-carboxamide. The protein operates within purine metabolism; IMP biosynthesis via de novo pathway; IMP from 5-formamido-1-(5-phospho-D-ribosyl)imidazole-4-carboxamide: step 1/1. In terms of biological role, catalyzes the cyclization of 5-formylamidoimidazole-4-carboxamide ribonucleotide to IMP. The protein is IMP cyclohydrolase of Thermococcus kodakarensis (strain ATCC BAA-918 / JCM 12380 / KOD1) (Pyrococcus kodakaraensis (strain KOD1)).